The primary structure comprises 392 residues: Phospho-N-acetylmuramoyl-pentapeptide-transferase (392 aa).

The next 10 helical transmembrane spans lie at 28–48 (IIAA…KLIA), 76–96 (TMGG…FADL), 101–121 (VWVM…DDWL), 137–157 (MVLQ…TWTL), 181–201 (WFNP…VVGT), 213–233 (GLAI…CYVA), 268–288 (GAEL…FLWF), 295–315 (VFMG…LAML), 320–340 (VVSA…MIQV), and 369–389 (KIIV…LLSL).

Belongs to the glycosyltransferase 4 family. MraY subfamily. Requires Mg(2+) as cofactor.

It localises to the cell inner membrane. It catalyses the reaction UDP-N-acetyl-alpha-D-muramoyl-L-alanyl-gamma-D-glutamyl-meso-2,6-diaminopimeloyl-D-alanyl-D-alanine + di-trans,octa-cis-undecaprenyl phosphate = di-trans,octa-cis-undecaprenyl diphospho-N-acetyl-alpha-D-muramoyl-L-alanyl-D-glutamyl-meso-2,6-diaminopimeloyl-D-alanyl-D-alanine + UMP. Its pathway is cell wall biogenesis; peptidoglycan biosynthesis. Functionally, catalyzes the initial step of the lipid cycle reactions in the biosynthesis of the cell wall peptidoglycan: transfers peptidoglycan precursor phospho-MurNAc-pentapeptide from UDP-MurNAc-pentapeptide onto the lipid carrier undecaprenyl phosphate, yielding undecaprenyl-pyrophosphoryl-MurNAc-pentapeptide, known as lipid I. The sequence is that of Phospho-N-acetylmuramoyl-pentapeptide-transferase from Myxococcus xanthus (strain DK1622).